A 194-amino-acid chain; its full sequence is Auxin-induced protein 22A (194 aa).

The short motif at 13–17 (LRLGL) is the EAR-like (transcriptional repression) element. The interval 40–62 (EIDDVGDENSSSGGGGDRKMENK) is disordered. Residues 85–173 (KMYVKVSMDG…KRLRIMKRAD (89 aa)) form the PB1 domain.

This sequence belongs to the Aux/IAA family. Homodimers and heterodimers.

Its subcellular location is the nucleus. Aux/IAA proteins are short-lived transcriptional factors that function as repressors of early auxin response genes at low auxin concentrations. Repression is thought to result from the interaction with auxin response factors (ARFs), proteins that bind to the auxin-responsive promoter element (AuxRE). Formation of heterodimers with ARF proteins may alter their ability to modulate early auxin response genes expression. In Vigna radiata var. radiata (Mung bean), this protein is Auxin-induced protein 22A (AUX22A).